Reading from the N-terminus, the 438-residue chain is V-type ATP synthase beta chain (438 aa).

Belongs to the ATPase alpha/beta chains family.

Produces ATP from ADP in the presence of a proton gradient across the membrane. The V-type beta chain is a regulatory subunit. The chain is V-type ATP synthase beta chain from Protochlamydia amoebophila (strain UWE25).